A 257-amino-acid polypeptide reads, in one-letter code: Cyclin-C1-1 (257 aa).

It belongs to the cyclin family. Cyclin C subfamily.

In Oryza sativa subsp. japonica (Rice), this protein is Cyclin-C1-1.